The following is a 637-amino-acid chain: Galactofuranosyltransferase GlfT2 (637 aa).

UDP-alpha-D-galactofuranose is bound by residues arginine 171, glutamine 200, asparagine 229, and aspartate 256. 2 residues coordinate Mn(2+): aspartate 256 and aspartate 258. The Proton acceptor role is filled by aspartate 372. Residue histidine 396 coordinates Mn(2+).

This sequence belongs to the glycosyltransferase 2 family. As to quaternary structure, homotetramer. Mn(2+) is required as a cofactor. It depends on Mg(2+) as a cofactor.

The protein localises to the cell membrane. The enzyme catalyses beta-D-galactofuranosyl-(1-&gt;5)-beta-D-galactofuranosyl-(1-&gt;4)-alpha-L-rhamnosyl-(1-&gt;3)-N-acetyl-alpha-D-glucosaminyl-diphospho-trans,octa-cis-decaprenol + 28 UDP-alpha-D-galactofuranose = [beta-D-galactofuranosyl-(1-&gt;5)-beta-D-galactofuranosyl-(1-&gt;6)]14-beta-D-galactofuranosyl-(1-&gt;5)-beta-D-galactofuranosyl-(1-&gt;4)-alpha-L-rhamnopyranosyl-(1-&gt;3)-N-acetyl-alpha-D-glucosaminyl-diphospho-trans,octa-cis-decaprenol + 28 UDP + 28 H(+). Its pathway is cell wall biogenesis; cell wall polysaccharide biosynthesis. Involved in the galactan polymerization of the arabinogalactan (AG) region of the mycolylarabinogalactan-peptidoglycan (mAGP) complex, an essential component of the mycobacteria cell wall. Thus, successively transfers approximately 28 galactofuranosyl (Galf) residues from UDP-galactofuranose (UDP-Galf) onto the galactofuranosyl-galactofuranosyl-rhamnosyl-GlcNAc-diphospho-decaprenol (Galf-Galf-Rha-GlcNAc-PP-C50) acceptor produced by GlfT1, with alternating 1-&gt;5 and 1-&gt;6 links, forming a galactan domain with approximately 30 galactofuranosyl residues. The chain is Galactofuranosyltransferase GlfT2 from Mycobacterium tuberculosis (strain ATCC 25618 / H37Rv).